The following is a 137-amino-acid chain: MPPKSRSTGPKKTQKARRRDKKNVPHGAAHIKSTFNNTIVSITDPAGNVISWASSGHVGFKGSRKSTPFAAQLAAENAARKAQEHGVKKVDVFVKGPGSGRETAIRSLQAAGLEVGTISDVTPQPHNGCRPPKRRRV.

Polar residues predominate over residues 1 to 11; the sequence is MPPKSRSTGPK. Disordered stretches follow at residues 1-28 and 117-137; these read MPPK…PHGA and TISD…RRRV. The span at 12 to 21 shows a compositional bias: basic residues; sequence KTQKARRRDK.

It belongs to the universal ribosomal protein uS11 family. In terms of assembly, part of the 30S ribosomal subunit. Interacts with proteins S7 and S18. Binds to IF-3.

Its function is as follows. Located on the platform of the 30S subunit, it bridges several disparate RNA helices of the 16S rRNA. Forms part of the Shine-Dalgarno cleft in the 70S ribosome. The polypeptide is Small ribosomal subunit protein uS11 (Rhodococcus opacus (strain B4)).